The sequence spans 426 residues: MLDSTTLFADACRFIPGGVNSPVRAFRGVGGTPVFVDRAEGPYVYGVDGKAYIDYVGSWGPMILGHAHPEVLTAVHAAVDRGLSYGAPTVAETAMAKTVCALMPSLDRVRMVSSGTEATMSAIRLARGYTGRDKIVKFEGCYHGHSDSLLVKAGSGALTLGAPSSPGVPANLAEHTLVLPYNDAAAVRDVFARHGAEIACIIVEPVAGNMNCVPPVPGFLETLRDVCDASGAVLIFDEVMTGFRVALGGAQAHYGICPDLTTLGKVIGGGMPVGAFGGRLDIMEQLAPVGQVYQAGTLSGNPVAMAAGLKTLELISQPKFFDELAEKTRHLAEGLRVRAEQAGIPLCVNWVGGMFGLFFTEQQGVSRFDQVMACDQERFRRFFHGMLEEGVYLAPSAFEAGFVSAAHDYQILDRTLTAAERVFAGL.

At K265 the chain carries N6-(pyridoxal phosphate)lysine.

This sequence belongs to the class-III pyridoxal-phosphate-dependent aminotransferase family. HemL subfamily. As to quaternary structure, homodimer. It depends on pyridoxal 5'-phosphate as a cofactor.

It is found in the cytoplasm. It catalyses the reaction (S)-4-amino-5-oxopentanoate = 5-aminolevulinate. Its pathway is porphyrin-containing compound metabolism; protoporphyrin-IX biosynthesis; 5-aminolevulinate from L-glutamyl-tRNA(Glu): step 2/2. The protein is Glutamate-1-semialdehyde 2,1-aminomutase of Methylococcus capsulatus (strain ATCC 33009 / NCIMB 11132 / Bath).